The sequence spans 230 residues: V-type proton ATPase subunit E (230 aa).

It belongs to the V-ATPase E subunit family. As to quaternary structure, V-ATPase is a heteromultimeric enzyme composed of a peripheral catalytic V1 complex (components A to H) attached to an integral membrane V0 proton pore complex (components: a, c, c', c'' and d).

In terms of biological role, subunit of the peripheral V1 complex of vacuolar ATPase essential for assembly or catalytic function. V-ATPase is responsible for acidifying a variety of intracellular compartments in eukaryotic cells. This chain is V-type proton ATPase subunit E (VATE), found in Citrus limon (Lemon).